Reading from the N-terminus, the 1100-residue chain is Exportin-T (1100 aa).

Belongs to the exportin family. In terms of assembly, interacts with GSP1, GSP2, NSP1, NUP2 and UTP8.

It localises to the nucleus. The protein resides in the cytoplasm. In terms of biological role, tRNA nucleus export receptor which facilitates tRNA translocation across the nuclear pore complex. Preferentially interacts with tRNAs with mature 5'- and 3'-termini and does not distinguish between intron-containing and spliced tRNAs. In the nucleus binds to tRNA and to the Ran-GTPases GSP1 or GSP2 in their active GTP-bound form. Docking of this trimeric complex to the nuclear pore complex (NPC) is mediated through binding to nucleoporins. Upon transit of a nuclear export complex into the cytoplasm, disassembling of the complex and hydrolysis of Ran-GTP to Ran-GDP cause release of the tRNA from the export receptor. The directionality of nuclear export is thought to be conferred by an asymmetric distribution of the GTP- and GDP-bound forms of Ran between the cytoplasm and nucleus. Involved in pre-tRNA splicing, probably by affecting the interaction of pre-tRNA with splicing endonuclease. The chain is Exportin-T (LOS1) from Saccharomyces cerevisiae (strain YJM789) (Baker's yeast).